The following is a 141-amino-acid chain: Zinc finger HIT domain-containing protein 3 (141 aa).

Residues 1 to 28 (LEKPKYRCPACRVPYCSVACFRKHKEQC) form an HIT-type; degenerate zinc finger. Zn(2+) contacts are provided by Cys-8, Cys-11, His-24, and Cys-28. At Ser-66 the chain carries Phosphoserine.

Thyroid receptor interacting proteins (TRIPs) specifically interact with the ligand binding domain of the thyroid receptor (TR). Requires the presence of thyroid hormone for its interaction. Interacts with NUFIP1. Interacts (via HIT-type zinc finger) with the RUVBL1/RUVBL2 complex in the presence of ADP.

The protein resides in the cytoplasm. It localises to the nucleus. The chain is Zinc finger HIT domain-containing protein 3 (ZNHIT3) from Pan troglodytes (Chimpanzee).